The primary structure comprises 130 residues: Small ribosomal subunit protein uS8 (130 aa).

Belongs to the universal ribosomal protein uS8 family. As to quaternary structure, part of the 30S ribosomal subunit. Contacts proteins S5 and S12.

In terms of biological role, one of the primary rRNA binding proteins, it binds directly to 16S rRNA central domain where it helps coordinate assembly of the platform of the 30S subunit. This chain is Small ribosomal subunit protein uS8, found in Shewanella sediminis (strain HAW-EB3).